Consider the following 641-residue polypeptide: DEAD-box ATP-dependent RNA helicase 50 (641 aa).

3 disordered regions span residues 86–115, 129–189, and 197–216; these read SMPS…IGNF, RSAH…LNSV, and DDLD…WGNI. The span at 150–159 shows a compositional bias: acidic residues; it reads PSDESDEDGT. Positions 240–268 match the Q motif motif; that stretch reads RSFKEIGCSDEILGALRSFGFPRPSHIQA. The 182-residue stretch at 271–452 folds into the Helicase ATP-binding domain; it reads YRPVLEGKSC…VETFPDCELI (182 aa). Position 284 to 291 (284 to 291) interacts with ATP; sequence DQSGSGKT. The DEAD box motif lies at 399 to 402; that stretch reads DEVD. The region spanning 487–641 is the Helicase C-terminal domain; the sequence is NKKSALVKII…GHPLHDVPCV (155 aa).

The protein belongs to the DEAD box helicase family.

The catalysed reaction is ATP + H2O = ADP + phosphate + H(+). Probably involved in resistance to biotic and abiotic stresses. Confers tolerance to oxidative stress and mediates pathogenesis-related (PR) genes expression. Exhibits RNA-dependent ATPase and ATP-dependent RNA helicase activities in vitro. The sequence is that of DEAD-box ATP-dependent RNA helicase 50 from Oryza sativa subsp. japonica (Rice).